Here is a 494-residue protein sequence, read N- to C-terminus: Subtilisin-like serine protease Pen ch 18.0101 (494 aa).

Residues 1–16 (MKGFLSLTLLPLLVAA) form the signal peptide. A propeptide spans 17-136 (SPVAVNSIHN…IEKDSEVRTM (120 aa)) (removed in mature form). In terms of domain architecture, Inhibitor I9 spans 43 to 136 (SYIVVFKKHV…IEKDSEVRTM (94 aa)). The Peptidase S8 domain maps to 146–448 (PWGLARISHR…GGSANYTKIL (303 aa)). 2 igE-binding regions span residues 180–198 (VIDT…RANW) and 209–231 (EDGN…GVAK). Catalysis depends on charge relay system residues Asp-182 and His-214. Asn-244 and Asn-280 each carry an N-linked (GlcNAc...) asparagine glycan. Ser-376 acts as the Charge relay system in catalysis. Asn-443 is a glycosylation site (N-linked (GlcNAc...) asparagine). The propeptide at 454–494 (KAHNAETTVEDRIGIIIDSAEKAFHKELGAIYSEIKDAVSV) is removed in mature form.

Belongs to the peptidase S8 family.

Serine protease. The chain is Subtilisin-like serine protease Pen ch 18.0101 from Penicillium rubens.